The primary structure comprises 276 residues: uncharacterized protein (276 aa).

Residue 15–22 coordinates ATP; that stretch reads GKGGVGKS. 4Fe-4S ferredoxin-type domains follow at residues 68 to 96 and 92 to 121; these read EIYEINDDCIRCGKCLDVCQFDAIGDFKI and GDFKINPILCEGCGACELICEFDAIEPIKR. Residues cysteine 76, cysteine 79, cysteine 82, cysteine 86, cysteine 101, cysteine 104, cysteine 107, and cysteine 111 each coordinate [4Fe-4S] cluster.

This is an uncharacterized protein from Methanocaldococcus jannaschii (strain ATCC 43067 / DSM 2661 / JAL-1 / JCM 10045 / NBRC 100440) (Methanococcus jannaschii).